A 100-amino-acid polypeptide reads, in one-letter code: NADH-quinone oxidoreductase subunit K 2 (100 aa).

3 helical membrane passes run Leu2 to Val22, Ile29 to Phe49, and Phe61 to Ile81.

This sequence belongs to the complex I subunit 4L family. In terms of assembly, NDH-1 is composed of 14 different subunits. Subunits NuoA, H, J, K, L, M, N constitute the membrane sector of the complex.

The protein localises to the cell inner membrane. It catalyses the reaction a quinone + NADH + 5 H(+)(in) = a quinol + NAD(+) + 4 H(+)(out). Its function is as follows. NDH-1 shuttles electrons from NADH, via FMN and iron-sulfur (Fe-S) centers, to quinones in the respiratory chain. The immediate electron acceptor for the enzyme in this species is believed to be ubiquinone. Couples the redox reaction to proton translocation (for every two electrons transferred, four hydrogen ions are translocated across the cytoplasmic membrane), and thus conserves the redox energy in a proton gradient. This Geobacter sp. (strain M21) protein is NADH-quinone oxidoreductase subunit K 2.